A 163-amino-acid polypeptide reads, in one-letter code: Large ribosomal subunit protein mL59 (163 aa).

Residues 33-53 (PAGADPETHKTPYQEESPNPF) are disordered.

This sequence belongs to the mitochondrion-specific ribosomal protein mL59 family. In terms of assembly, component of the mitochondrial large ribosomal subunit (mt-LSU). Mature N.crassa 74S mitochondrial ribosomes consist of a small (37S) and a large (54S) subunit. The 37S small subunit contains a 16S ribosomal RNA (16S mt-rRNA) and 32 different proteins. The 54S large subunit contains a 23S rRNA (23S mt-rRNA) and 42 different proteins.

The protein localises to the mitochondrion. Component of the mitochondrial ribosome (mitoribosome), a dedicated translation machinery responsible for the synthesis of mitochondrial genome-encoded proteins, including at least some of the essential transmembrane subunits of the mitochondrial respiratory chain. The mitoribosomes are attached to the mitochondrial inner membrane and translation products are cotranslationally integrated into the membrane. This chain is Large ribosomal subunit protein mL59 (mrpl25), found in Neurospora crassa (strain ATCC 24698 / 74-OR23-1A / CBS 708.71 / DSM 1257 / FGSC 987).